The chain runs to 54 residues: Rubredoxin (54 aa).

Met1 carries the N-formylmethionine modification. One can recognise a Rubredoxin-like domain in the interval 1–54; sequence MKKYTCTVCGYIYNPEDGDPDNGVNPGTDFKDIPDDWVCPLCGVGKDQFEEVEE. 4 residues coordinate Fe cation: Cys6, Cys9, Cys39, and Cys42.

This sequence belongs to the rubredoxin family. Fe(3+) serves as cofactor.

In terms of biological role, rubredoxin is a small nonheme, iron protein lacking acid-labile sulfide. Its single Fe, chelated to 4 Cys, functions as an electron acceptor and may also stabilize the conformation of the molecule. This chain is Rubredoxin, found in Clostridium pasteurianum.